Reading from the N-terminus, the 90-residue chain is Small ribosomal subunit protein bS20 (90 aa).

The protein belongs to the bacterial ribosomal protein bS20 family.

In terms of biological role, binds directly to 16S ribosomal RNA. The polypeptide is Small ribosomal subunit protein bS20 (Francisella tularensis subsp. tularensis (strain FSC 198)).